Reading from the N-terminus, the 166-residue chain is Desiccation-related protein At2g46140 (166 aa).

This sequence belongs to the LEA type 2 family.

The sequence is that of Desiccation-related protein At2g46140 from Arabidopsis thaliana (Mouse-ear cress).